A 131-amino-acid polypeptide reads, in one-letter code: Profilin-6 (131 aa).

Residues Cys-13 and Cys-115 are joined by a disulfide bond. The Involved in PIP2 interaction motif lies at Ala-81–Thr-97. Position 111 is a phosphothreonine (Thr-111).

The protein belongs to the profilin family. Occurs in many kinds of cells as a complex with monomeric actin in a 1:1 ratio. Phosphorylated by MAP kinases.

The protein localises to the cytoplasm. It is found in the cytoskeleton. Functionally, binds to actin and affects the structure of the cytoskeleton. At high concentrations, profilin prevents the polymerization of actin, whereas it enhances it at low concentrations. The chain is Profilin-6 from Phleum pratense (Common timothy).